A 389-amino-acid chain; its full sequence is Alkanesulfonate monooxygenase (389 aa).

This sequence belongs to the SsuD family.

The enzyme catalyses an alkanesulfonate + FMNH2 + O2 = an aldehyde + FMN + sulfite + H2O + 2 H(+). Its function is as follows. Catalyzes the desulfonation of aliphatic sulfonates. This chain is Alkanesulfonate monooxygenase, found in Agrobacterium fabrum (strain C58 / ATCC 33970) (Agrobacterium tumefaciens (strain C58)).